Consider the following 72-residue polypeptide: DNA-directed RNA polymerase subunit omega (72 aa).

The protein belongs to the RNA polymerase subunit omega family. As to quaternary structure, the RNAP catalytic core consists of 2 alpha, 1 beta, 1 beta' and 1 omega subunit. When a sigma factor is associated with the core the holoenzyme is formed, which can initiate transcription.

It carries out the reaction RNA(n) + a ribonucleoside 5'-triphosphate = RNA(n+1) + diphosphate. Promotes RNA polymerase assembly. Latches the N- and C-terminal regions of the beta' subunit thereby facilitating its interaction with the beta and alpha subunits. The polypeptide is DNA-directed RNA polymerase subunit omega (Campylobacter lari (strain RM2100 / D67 / ATCC BAA-1060)).